Reading from the N-terminus, the 63-residue chain is 2-hydroxymuconate tautomerase (63 aa).

Residue proline 2 is the Proton acceptor; via imino nitrogen of the active site.

This sequence belongs to the 4-oxalocrotonate tautomerase family. In terms of assembly, homohexamer.

It carries out the reaction (2Z,4E)-2-hydroxyhexa-2,4-dienedioate = (3E)-2-oxohex-3-enedioate. Its pathway is xenobiotic degradation; toluene degradation. It functions in the pathway xenobiotic degradation; xylene degradation. Catalyzes the ketonization of 2-hydroxymuconate stereoselectively to yield 2-oxo-3-hexenedioate. The sequence is that of 2-hydroxymuconate tautomerase (xylH) from Pseudomonas putida (Arthrobacter siderocapsulatus).